Reading from the N-terminus, the 286-residue chain is 4-hydroxybenzoate octaprenyltransferase (286 aa).

Helical transmembrane passes span 21–40, 95–115, 142–162, 167–187, 211–231, 235–255, and 266–286; these read GTLLLMWPCLMALMLAAGGM, ILFVVLGLSAFGLVLLLNGLV, FLGVVWSWSIPMAYAAQTGEV, WWLFAANWFWTVAYDTMYAMV, IIGLFQIAALVCFIAAGWSAE, LYGLGLLTFVGFSTYQQMLIF, and FLNNNWAGLALFVGLGADYLI.

This sequence belongs to the UbiA prenyltransferase family. Mg(2+) is required as a cofactor.

Its subcellular location is the cell inner membrane. It carries out the reaction all-trans-octaprenyl diphosphate + 4-hydroxybenzoate = 4-hydroxy-3-(all-trans-octaprenyl)benzoate + diphosphate. It participates in cofactor biosynthesis; ubiquinone biosynthesis. Catalyzes the prenylation of para-hydroxybenzoate (PHB) with an all-trans polyprenyl group. Mediates the second step in the final reaction sequence of ubiquinone-8 (UQ-8) biosynthesis, which is the condensation of the polyisoprenoid side chain with PHB, generating the first membrane-bound Q intermediate 3-octaprenyl-4-hydroxybenzoate. The polypeptide is 4-hydroxybenzoate octaprenyltransferase (Shewanella putrefaciens (strain CN-32 / ATCC BAA-453)).